We begin with the raw amino-acid sequence, 465 residues long: Siroheme synthase (465 aa).

Residues Met1–Leu203 are precorrin-2 dehydrogenase /sirohydrochlorin ferrochelatase. NAD(+) contacts are provided by residues Glu22–Val23 and Pro43–Gln44. Ser128 is subject to Phosphoserine. The interval Gly217 to Ala465 is uroporphyrinogen-III C-methyltransferase. An S-adenosyl-L-methionine-binding site is contributed by Pro226. The active-site Proton acceptor is Asp249. Lys271 acts as the Proton donor in catalysis. Residues Gly302–Asp304, Ile307, Thr332–Ala333, Met384, and Gly413 contribute to the S-adenosyl-L-methionine site.

In the N-terminal section; belongs to the precorrin-2 dehydrogenase / sirohydrochlorin ferrochelatase family. This sequence in the C-terminal section; belongs to the precorrin methyltransferase family.

It catalyses the reaction uroporphyrinogen III + 2 S-adenosyl-L-methionine = precorrin-2 + 2 S-adenosyl-L-homocysteine + H(+). It carries out the reaction precorrin-2 + NAD(+) = sirohydrochlorin + NADH + 2 H(+). The catalysed reaction is siroheme + 2 H(+) = sirohydrochlorin + Fe(2+). The protein operates within cofactor biosynthesis; adenosylcobalamin biosynthesis; precorrin-2 from uroporphyrinogen III: step 1/1. It participates in cofactor biosynthesis; adenosylcobalamin biosynthesis; sirohydrochlorin from precorrin-2: step 1/1. Its pathway is porphyrin-containing compound metabolism; siroheme biosynthesis; precorrin-2 from uroporphyrinogen III: step 1/1. It functions in the pathway porphyrin-containing compound metabolism; siroheme biosynthesis; siroheme from sirohydrochlorin: step 1/1. The protein operates within porphyrin-containing compound metabolism; siroheme biosynthesis; sirohydrochlorin from precorrin-2: step 1/1. Its function is as follows. Multifunctional enzyme that catalyzes the SAM-dependent methylations of uroporphyrinogen III at position C-2 and C-7 to form precorrin-2 via precorrin-1. Then it catalyzes the NAD-dependent ring dehydrogenation of precorrin-2 to yield sirohydrochlorin. Finally, it catalyzes the ferrochelation of sirohydrochlorin to yield siroheme. This Pseudomonas paraeruginosa (strain DSM 24068 / PA7) (Pseudomonas aeruginosa (strain PA7)) protein is Siroheme synthase.